A 97-amino-acid chain; its full sequence is Aspartyl/glutamyl-tRNA(Asn/Gln) amidotransferase subunit C (97 aa).

This sequence belongs to the GatC family. As to quaternary structure, heterotrimer of A, B and C subunits.

The catalysed reaction is L-glutamyl-tRNA(Gln) + L-glutamine + ATP + H2O = L-glutaminyl-tRNA(Gln) + L-glutamate + ADP + phosphate + H(+). It catalyses the reaction L-aspartyl-tRNA(Asn) + L-glutamine + ATP + H2O = L-asparaginyl-tRNA(Asn) + L-glutamate + ADP + phosphate + 2 H(+). Functionally, allows the formation of correctly charged Asn-tRNA(Asn) or Gln-tRNA(Gln) through the transamidation of misacylated Asp-tRNA(Asn) or Glu-tRNA(Gln) in organisms which lack either or both of asparaginyl-tRNA or glutaminyl-tRNA synthetases. The reaction takes place in the presence of glutamine and ATP through an activated phospho-Asp-tRNA(Asn) or phospho-Glu-tRNA(Gln). This is Aspartyl/glutamyl-tRNA(Asn/Gln) amidotransferase subunit C from Nostoc punctiforme (strain ATCC 29133 / PCC 73102).